A 309-amino-acid polypeptide reads, in one-letter code: uncharacterized protein (309 aa).

Belongs to the anthranilate phosphoribosyltransferase family.

This is an uncharacterized protein from Aquifex aeolicus (strain VF5).